Reading from the N-terminus, the 508-residue chain is Maturase K (508 aa).

It belongs to the intron maturase 2 family. MatK subfamily.

It is found in the plastid. The protein resides in the chloroplast. Usually encoded in the trnK tRNA gene intron. Probably assists in splicing its own and other chloroplast group II introns. In Wolffia arrhiza (Rootless water-meal), this protein is Maturase K.